Here is a 229-residue protein sequence, read N- to C-terminus: Large ribosomal subunit protein uL1 (229 aa).

It belongs to the universal ribosomal protein uL1 family. As to quaternary structure, part of the 50S ribosomal subunit.

Its function is as follows. Binds directly to 23S rRNA. The L1 stalk is quite mobile in the ribosome, and is involved in E site tRNA release. In terms of biological role, protein L1 is also a translational repressor protein, it controls the translation of the L11 operon by binding to its mRNA. The protein is Large ribosomal subunit protein uL1 of Ureaplasma parvum serovar 3 (strain ATCC 27815 / 27 / NCTC 11736).